We begin with the raw amino-acid sequence, 87 residues long: Small ribosomal subunit protein bS20 (87 aa).

Belongs to the bacterial ribosomal protein bS20 family.

Functionally, binds directly to 16S ribosomal RNA. The chain is Small ribosomal subunit protein bS20 from Mycoplasma pneumoniae (strain ATCC 29342 / M129 / Subtype 1) (Mycoplasmoides pneumoniae).